A 440-amino-acid polypeptide reads, in one-letter code: MIKDATAITLNPISYIEGEVRLPGSKSLSNRALLLSALAKGKTTLTNLLDSDDVRHMLNALKELGVTYQLSEDKSVCEIEGLGRAFEWQSGLALFLGNAGTAMRPLTAALCLSTPNKEGKNEIVLTGEPRMKERPIQHLVDALCQAGAEIQYLEQEGYPPIAIRNTGLKGGRIQIDGSVSSQFLTALLMAAPMAEADTEIEIIGELVSKPYIDITLKMMQTFGVEVENQAYQRFLVKGHQQYQSPHRFLVEGDASSASYFLAAAAIKGKVKVTGVGKNSIQGDRLFADVLEKMGAHITWGDDFIQVEKGNLKGIDMDMNHIPDAAMTIATTALFAEGETVIRNIYNWRVKETDRLTAMATELRKVGAEVEEGEDFIRIQPLNLAQFQHAEIETYNDHRMAMCFALIALSQTSVTILDPSCTAKTFPTFFDTFLRLTHAES.

Positions 26, 27, and 31 each coordinate 3-phosphoshikimate. Lys-26 serves as a coordination point for phosphoenolpyruvate. The phosphoenolpyruvate site is built by Gly-100 and Arg-134. 3-phosphoshikimate is bound by residues Ser-180, Ser-181, Gln-182, Ser-208, Asp-323, Asn-346, and Lys-350. Residue Gln-182 participates in phosphoenolpyruvate binding. The active-site Proton acceptor is Asp-323. 3 residues coordinate phosphoenolpyruvate: Arg-354, Arg-398, and Lys-423.

The protein belongs to the EPSP synthase family. In terms of assembly, monomer.

It localises to the cytoplasm. It carries out the reaction 3-phosphoshikimate + phosphoenolpyruvate = 5-O-(1-carboxyvinyl)-3-phosphoshikimate + phosphate. Its pathway is metabolic intermediate biosynthesis; chorismate biosynthesis; chorismate from D-erythrose 4-phosphate and phosphoenolpyruvate: step 6/7. Functionally, catalyzes the transfer of the enolpyruvyl moiety of phosphoenolpyruvate (PEP) to the 5-hydroxyl of shikimate-3-phosphate (S3P) to produce enolpyruvyl shikimate-3-phosphate and inorganic phosphate. The sequence is that of 3-phosphoshikimate 1-carboxyvinyltransferase from Pasteurella multocida (strain Pm70).